The chain runs to 210 residues: Large ribosomal subunit protein uL4 (210 aa).

A disordered region spans residues 49-76 (HCTKTRSEVSGGGKKPWRQKHTGRARHG). A compositionally biased stretch (basic residues) spans 63-76 (KPWRQKHTGRARHG).

It belongs to the universal ribosomal protein uL4 family. Part of the 50S ribosomal subunit.

One of the primary rRNA binding proteins, this protein initially binds near the 5'-end of the 23S rRNA. It is important during the early stages of 50S assembly. It makes multiple contacts with different domains of the 23S rRNA in the assembled 50S subunit and ribosome. Its function is as follows. Forms part of the polypeptide exit tunnel. This is Large ribosomal subunit protein uL4 from Thermodesulfovibrio yellowstonii (strain ATCC 51303 / DSM 11347 / YP87).